Reading from the N-terminus, the 1137-residue chain is Protein sel-1 homolog 3 (1137 aa).

The interval 1–42 (MQWRGAGLWWPRRRQQQQQQQPPPPAFGPPAAAMVPPSRGVS) is disordered. N206 and N387 each carry an N-linked (GlcNAc...) asparagine glycan. Sel1-like repeat units follow at residues 575–609 (HKAS…GQGS), 611–647 (RLSS…TKTP), 694–730 (AAAQ…LETE), 732–767 (PALI…SKGL), 768–800 (HQAV…EMGN), 801–839 (PDAS…QGGH), and 840–877 (IEGT…EKNG). Phosphoserine is present on S613. N942 carries an N-linked (GlcNAc...) asparagine glycan. Residues 952–988 (SFAYLKMGDLYYYGHQNQSQDLELSVQMYAQAALDGD) form a Sel1-like 8 repeat. Residues 1067-1087 (LIYFLGTFLLSVVIAWMVLYL) form a helical membrane-spanning segment. A disordered region spans residues 1100–1137 (AWVSADPTSSTPSPAVPPAADASDHDPPMMANGPEPRG). Over residues 1102 to 1120 (VSADPTSSTPSPAVPPAAD) the composition is skewed to low complexity.

It is found in the membrane. The polypeptide is Protein sel-1 homolog 3 (Sel1l3) (Mus musculus (Mouse)).